The following is a 115-amino-acid chain: Large ribosomal subunit protein P2x (115 aa).

The disordered stretch occupies residues 78–115; it reads GGGGGAASAAEPVAESKKKVEEVKDESSDDAGMMGLFD. Basic and acidic residues predominate over residues 91-103; that stretch reads AESKKKVEEVKDE. Residues Ser-104 and Ser-105 each carry the phosphoserine modification.

It belongs to the eukaryotic ribosomal protein P1/P2 family. P1 and P2 exist as dimers at the large ribosomal subunit.

Functionally, plays an important role in the elongation step of protein synthesis. In Arabidopsis thaliana (Mouse-ear cress), this protein is Large ribosomal subunit protein P2x (RPP2C).